A 107-amino-acid chain; its full sequence is Nucleoid-associated protein CE0210 (107 aa).

The protein belongs to the YbaB/EbfC family. As to quaternary structure, homodimer.

It localises to the cytoplasm. The protein resides in the nucleoid. Its function is as follows. Binds to DNA and alters its conformation. May be involved in regulation of gene expression, nucleoid organization and DNA protection. The protein is Nucleoid-associated protein CE0210 of Corynebacterium efficiens (strain DSM 44549 / YS-314 / AJ 12310 / JCM 11189 / NBRC 100395).